Reading from the N-terminus, the 147-residue chain is Angiogenin (147 aa).

An N-terminal signal peptide occupies residues 1 to 24 (MVILLGPLLLVFMLGLGLAPLSLA). Residue His-37 is the Proton acceptor of the active site. TRNA contacts are provided by Arg-45 and Asp-46. Intrachain disulfides connect Cys-50–Cys-104, Cys-63–Cys-115, and Cys-81–Cys-130. A Nucleolar localization signal motif is present at residues 55 to 59 (KQRGL). Residues Cys-104 and Ile-126 each contribute to the tRNA site. The active-site Proton donor is His-137.

It belongs to the pancreatic ribonuclease family. In terms of assembly, homodimer. Interacts with RNH1; inhibiting ANG ribonuclease activity. Interacts with PCNA.

The protein resides in the secreted. It is found in the nucleus. It localises to the nucleolus. The protein localises to the cytoplasm. Its subcellular location is the stress granule. Its activity is regulated as follows. Has weak tRNA ribonuclease activity by itself due to partial autoinhibition by its C-terminus, which folds into a short alpha-helix that partially occludes the substrate-binding site. In absence of stress, the ribonuclease activity is inhibited by RNH1 in the cytoplasm. In response to stress, dissociates from RNH1 in the cytoplasm and associates with cytoplasmic ribosomes with vacant A-sites: ribosomes directly activate the tRNA ribonuclease activity of ANG by refolding the C-terminal alpha-helix. In response to stress, the angiogenic activity of ANG is inhibited by RNH1 in the nucleus. Functionally, secreted ribonuclease that can either promote or restrict cell proliferation of target cells, depending on the context. Endocytosed in target cells via its receptor PLXNB2 and translocates to the cytoplasm or nucleus. Under stress conditions, localizes to the cytoplasm and promotes the assembly of stress granules (SGs): specifically cleaves a subset of tRNAs within anticodon loops to produce tRNA-derived stress-induced fragments (tiRNAs), resulting in translation repression and inhibition of cell proliferation. tiRNas also prevent formation of apoptosome, thereby promoting cell survival. Preferentially cleaves RNAs between a pyrimidine and an adenosine residue, suggesting that it cleaves the anticodon loop of tRNA(Ala) (32-UUAGCAU-38) after positions 33 and 36. Cleaves a subset of tRNAs, including tRNA(Ala), tRNA(Glu), tRNA(Gly), tRNA(Lys), tRNA(Val), tRNA(His), tRNA(Asp) and tRNA(Sec). Under growth conditions and in differentiated cells, translocates to the nucleus and stimulates ribosomal RNA (rRNA) transcription, including that containing the initiation site sequences of 45S rRNA, thereby promoting cell growth and proliferation. Angiogenin induces vascularization of normal and malignant tissues via its ability to promote rRNA transcription. Involved in hematopoietic stem and progenitor cell (HSPC) growth and survival by promoting rRNA transcription in growth conditions and inhibiting translation in response to stress, respectively. Mediates the crosstalk between myeloid and intestinal epithelial cells to protect the intestinal epithelial barrier integrity: secreted by myeloid cells and promotes intestinal epithelial cells proliferation and survival. Also mediates osteoclast-endothelial cell crosstalk in growing bone: produced by osteoclasts and protects the neighboring vascular cells against senescence by promoting rRNA transcription. The polypeptide is Angiogenin (ANG) (Sus scrofa (Pig)).